Here is a 256-residue protein sequence, read N- to C-terminus: Fructose-1,6-bisphosphatase/inositol-1-monophosphatase (256 aa).

Positions 65, 79, 81, and 82 each coordinate Mg(2+). Substrate is bound by residues 82–84 (DGT), Arg-172, Ala-177, and Arg-196. Asp-201 contributes to the Mg(2+) binding site.

Belongs to the inositol monophosphatase superfamily. FBPase class 4 family. Homotetramer. The cofactor is Mg(2+).

The enzyme catalyses beta-D-fructose 1,6-bisphosphate + H2O = beta-D-fructose 6-phosphate + phosphate. It carries out the reaction a myo-inositol phosphate + H2O = myo-inositol + phosphate. In contrast to mammalian I-1-P phosphatases, is only weakly inhibited by Li(+), since 50% inhibitory concentration for Li(+) is about 100 mM, and the Li(+) concentration required to totally abolish I-1-Pase activity is 1 M. Functionally, phosphatase with broad specificity; it can dephosphorylate fructose 1,6-bisphosphate, both D and L isomers of inositol-1-phosphate (I-1-P) but displaying a 20-fold higher rate of hydrolysis of D-I-1-P than of the L isomer, 2'-AMP, pNPP, inositol-2-phosphate, beta-glycerol phosphate, and alpha-D-glucose-1-phosphate. Cannot hydrolyze glucose-6-phosphate, fructose-6-phosphate, 5'-AMP and NAD(+). May be involved in the biosynthesis of a unique osmolyte, di-myo-inositol 1,1-phosphate. The polypeptide is Fructose-1,6-bisphosphatase/inositol-1-monophosphatase (suhB) (Thermotoga maritima (strain ATCC 43589 / DSM 3109 / JCM 10099 / NBRC 100826 / MSB8)).